A 281-amino-acid chain; its full sequence is Acetyl-coenzyme A carboxylase carboxyl transferase subunit beta (281 aa).

In terms of domain architecture, CoA carboxyltransferase N-terminal spans 24-281 (GLWYKSPKGK…TKLLTMLANN (258 aa)).

It belongs to the AccD/PCCB family. In terms of assembly, acetyl-CoA carboxylase is a heterohexamer composed of biotin carboxyl carrier protein (AccB), biotin carboxylase (AccC) and two subunits each of ACCase subunit alpha (AccA) and ACCase subunit beta (AccD).

The protein localises to the cytoplasm. It carries out the reaction N(6)-carboxybiotinyl-L-lysyl-[protein] + acetyl-CoA = N(6)-biotinyl-L-lysyl-[protein] + malonyl-CoA. It participates in lipid metabolism; malonyl-CoA biosynthesis; malonyl-CoA from acetyl-CoA: step 1/1. Its function is as follows. Component of the acetyl coenzyme A carboxylase (ACC) complex. Biotin carboxylase (BC) catalyzes the carboxylation of biotin on its carrier protein (BCCP) and then the CO(2) group is transferred by the transcarboxylase to acetyl-CoA to form malonyl-CoA. In Amoebophilus asiaticus (strain 5a2), this protein is Acetyl-coenzyme A carboxylase carboxyl transferase subunit beta.